Here is a 123-residue protein sequence, read N- to C-terminus: Holo-[acyl-carrier-protein] synthase (123 aa).

Aspartate 8 and glutamate 56 together coordinate Mg(2+).

This sequence belongs to the P-Pant transferase superfamily. AcpS family. Requires Mg(2+) as cofactor.

Its subcellular location is the cytoplasm. The enzyme catalyses apo-[ACP] + CoA = holo-[ACP] + adenosine 3',5'-bisphosphate + H(+). In terms of biological role, transfers the 4'-phosphopantetheine moiety from coenzyme A to a Ser of acyl-carrier-protein. The polypeptide is Holo-[acyl-carrier-protein] synthase (Clostridium botulinum (strain Eklund 17B / Type B)).